The chain runs to 297 residues: Protease HtpX homolog (297 aa).

The next 2 helical transmembrane spans lie at 5-25 (IFLF…VLSI) and 44-64 (IVAL…MSLL). His155 provides a ligand contact to Zn(2+). Glu156 is an active-site residue. His159 is a Zn(2+) binding site. 2 helical membrane-spanning segments follow: residues 170–190 (LLQG…AWAV) and 204–224 (FIAV…VVFA). Residue Glu230 participates in Zn(2+) binding.

It belongs to the peptidase M48B family. Zn(2+) is required as a cofactor.

It localises to the cell membrane. The polypeptide is Protease HtpX homolog (Bacillus licheniformis (strain ATCC 14580 / DSM 13 / JCM 2505 / CCUG 7422 / NBRC 12200 / NCIMB 9375 / NCTC 10341 / NRRL NRS-1264 / Gibson 46)).